Consider the following 211-residue polypeptide: NADH-quinone oxidoreductase subunit I (211 aa).

4Fe-4S ferredoxin-type domains are found at residues 90 to 119 (RLWE…IDTK) and 129 to 158 (TEYS…HGGE). Residues C99, C102, C105, C109, C138, C141, C144, and C148 each contribute to the [4Fe-4S] cluster site.

This sequence belongs to the complex I 23 kDa subunit family. In terms of assembly, NDH-1 is composed of 14 different subunits. Subunits NuoA, H, J, K, L, M, N constitute the membrane sector of the complex. [4Fe-4S] cluster serves as cofactor.

Its subcellular location is the cell inner membrane. The enzyme catalyses a quinone + NADH + 5 H(+)(in) = a quinol + NAD(+) + 4 H(+)(out). In terms of biological role, NDH-1 shuttles electrons from NADH, via FMN and iron-sulfur (Fe-S) centers, to quinones in the respiratory chain. The immediate electron acceptor for the enzyme in this species is believed to be ubiquinone. Couples the redox reaction to proton translocation (for every two electrons transferred, four hydrogen ions are translocated across the cytoplasmic membrane), and thus conserves the redox energy in a proton gradient. The polypeptide is NADH-quinone oxidoreductase subunit I (Sulfurimonas denitrificans (strain ATCC 33889 / DSM 1251) (Thiomicrospira denitrificans (strain ATCC 33889 / DSM 1251))).